The chain runs to 349 residues: GATA zinc finger domain-containing protein 24 (349 aa).

2 stretches are compositionally biased toward low complexity: residues 95-169 (NINR…VNKN) and 177-195 (NKSCKNNNINNNNNNNNNS). 2 disordered regions span residues 95-227 (NINR…PVIK) and 250-294 (DYDY…KPVQ). Basic and acidic residues predominate over residues 196 to 212 (ENKEKNNINNNNEKENN). A compositionally biased stretch (low complexity) spans 257–272 (SNESSSPTLSASTLSS). The span at 278–289 (KVLKRGRGRPSK) shows a compositional bias: basic residues. Residues 295 to 323 (CFSCFRSNTPEWRKGKDKDGNVIDLCNAC) form a GATA-type zinc finger.

The protein is GATA zinc finger domain-containing protein 24 (gtaX) of Dictyostelium discoideum (Social amoeba).